The sequence spans 443 residues: C4-dicarboxylate transport protein (443 aa).

10 consecutive transmembrane segments (helical) span residues 10–30 (SLYF…HFYP), 46–66 (LIKM…IAGM), 78–98 (YALL…LIVV), 130–150 (SIVG…FANG), 152–172 (ILQV…LGAY), 199–219 (PLGA…GSLV), 224–244 (LMIC…GAIC), 291–311 (VVGL…SIYL), 332–352 (ITLL…TGSG), and 354–374 (IVLA…LALI). Residues 415–443 (ELASGGRPITDTRETDDLGVAEGPAPSIK) are disordered.

It belongs to the dicarboxylate/amino acid:cation symporter (DAACS) (TC 2.A.23) family.

It is found in the cell inner membrane. In terms of biological role, responsible for the transport of dicarboxylates such as succinate, fumarate, and malate from the periplasm across the membrane. The protein is C4-dicarboxylate transport protein of Pseudomonas fluorescens (strain ATCC BAA-477 / NRRL B-23932 / Pf-5).